The sequence spans 279 residues: H-2 class II histocompatibility antigen gamma chain (279 aa).

The interval 1–23 (MDDQRDLISNHEQLPILGNRPRE) is disordered. The Cytoplasmic portion of the chain corresponds to 1-29 (MDDQRDLISNHEQLPILGNRPREPERCSR). S9 carries the phosphoserine modification. Residues 30–55 (GALYTGVSVLVALLLAGQATTAYFLY) traverse the membrane as a helical; Signal-anchor for type II membrane protein segment. Residues 56 to 279 (QQQGRLDKLT…TRQELGQVTL (224 aa)) lie on the Extracellular side of the membrane. Residues N113 and N119 are each glycosylated (N-linked (GlcNAc...) asparagine). A Thyroglobulin type-1 domain is found at 193–254 (LTKCQEEVSH…HTKSRGRHNC (62 aa)). Disulfide bonds link C196-C215, C226-C233, and C235-C254. An O-linked (Xyl...) (chondroitin sulfate) serine glycan is attached at S265.

In terms of assembly, nonamer composed of three alpha/beta/gamma heterotrimers. Interacts with CD44; this complex is essential for the MIF-induced signaling cascade that results in B cell survival. Interacts with the mature form of CTSL; the complex survive in neutral pH environment. As to expression, expressed in thymus and lymph noodes. Expressed by antigen-presenting cells (APCs). Expressed in thymus and lymph noodes.

The protein localises to the late endosome. It localises to the lysosome. The protein resides in the cell membrane. It is found in the endoplasmic reticulum membrane. Its subcellular location is the golgi apparatus. The protein localises to the trans-Golgi network. It localises to the endosome. The protein resides in the secreted. Its function is as follows. Plays a critical role in MHC class II antigen processing by stabilizing peptide-free class II alpha/beta heterodimers in a complex soon after their synthesis and directing transport of the complex from the endoplasmic reticulum to compartments where peptide loading of class II takes place. Enhance also the stimulation of T-cell responses through interaction with CD44. Functionally, stabilizes the conformation of mature CTSL by binding to its active site and serving as a chaperone to help maintain a pool of mature enzyme in endocytic compartments and extracellular space of antigen-presenting cells (APCs). In terms of biological role, binds to the peptide-binding site of MHC class II alpha/beta heterodimers forming an alpha-beta-CLIP complex, thereby preventing the loading of antigenic peptides to the MHC class II complex until its release by HLA-DM in the endosome. The polypeptide is H-2 class II histocompatibility antigen gamma chain (Mus musculus (Mouse)).